A 1348-amino-acid polypeptide reads, in one-letter code: Kinesin-like protein KIF7 (1348 aa).

A Kinesin motor domain is found at Pro15–Ile349. Residue Gly94–Thr101 participates in ATP binding. The interval His358 to Gly479 is interaction with DLG5. Residues His358–Glu1211 are interaction with SMO. Disordered stretches follow at residues Arg451–Thr486 and Ala607–Glu674. The stretch at Arg480 to Gln542 forms a coiled coil. Acidic residues predominate over residues Ser620–Glu636. Coiled-coil stretches lie at residues Ala698–Leu1057 and Phe1109–Glu1211. A Phosphoserine modification is found at Ser903. 2 disordered regions span residues Leu1288–Met1314 and Lys1328–Leu1348.

Belongs to the TRAFAC class myosin-kinesin ATPase superfamily. Kinesin family. As to quaternary structure, can form homodimers and interacts with microtubules. Interacts with GLI1 and SMO. Interacts with GLI2, GLI3 and SUFU. Interacts with NPHP1. Interacts with SMO and DLG5 (via PDZ4 or guanylate kinase-like domain). Post-translationally, polyubiquitinated by UBR3. In terms of tissue distribution, expressed in heart, lung, liver, kidney, testis, spleen and cerebellum.

The protein resides in the cell projection. It localises to the cilium. The protein localises to the cytoplasm. Its subcellular location is the cytoskeleton. It is found in the cilium basal body. In terms of biological role, essential for hedgehog signaling regulation: acts both as a negative and a positive regulator of sonic hedgehog (Shh) and Indian hedgehog (Ihh) pathways, acting downstream of SMO, through both SUFU-dependent and -independent mechanisms. Involved in the regulation of microtubular dynamics. Required for proper organization of the ciliary tip and control of ciliary localization of SUFU-GLI2 complexes. Required for localization of GLI3 to cilia in response to Shh. Negatively regulates Shh signaling by preventing inappropriate activation of the transcriptional activator GLI2 in the absence of ligand. Positively regulates Shh signaling by preventing the processing of the transcription factor GLI3 into its repressor form. In keratinocytes, promotes the dissociation of SUFU-GLI2 complexes, GLI2 nuclear translocation and Shh signaling activation. Involved in the regulation of epidermal differentiation and chondrocyte development. The sequence is that of Kinesin-like protein KIF7 (Kif7) from Mus musculus (Mouse).